Consider the following 470-residue polypeptide: Probable tocopherol cyclase, chloroplastic (470 aa).

The N-terminal 61 residues, 1–61 (MDLAAAAVAV…APTPRDRALR (61 aa)), are a transit peptide targeting the chloroplast. The disordered stretch occupies residues 14 to 48 (RPAPPPRRCAPRRHRRALAPRAASSSPSPSTAVAA). The segment covering 22–31 (CAPRRHRRAL) has biased composition (basic residues). Over residues 32-48 (APRAASSSPSPSTAVAA) the composition is skewed to low complexity.

In terms of tissue distribution, expressed in the roots, stems, leaves and spikelets.

The protein resides in the plastid. It is found in the chloroplast. It localises to the plastoglobule. Its pathway is cofactor biosynthesis; tocopherol biosynthesis. In terms of biological role, involved in the synthesis of both tocopherols and tocotrienols (vitamin E), which presumably protect photosynthetic complexes from oxidative stress. Catalyzes the conversion of 2-methyl-6-phytyl-1,4-hydroquinone and 2,3-dimethyl-5-phytyl-1,4-hydroquinone (DMPQ) to delta- and gamma-tocopherol respectively. Also converts 2,3-dimethyl-5-geranylgeranyl-1,4-hydroquinone (DMGQ) to gamma-tocotrienol. The protein is Probable tocopherol cyclase, chloroplastic (VTE1) of Oryza sativa subsp. japonica (Rice).